The chain runs to 122 residues: Large ribosomal subunit protein uL14 (122 aa).

It belongs to the universal ribosomal protein uL14 family. Part of the 50S ribosomal subunit. Forms a cluster with proteins L3 and L19. In the 70S ribosome, L14 and L19 interact and together make contacts with the 16S rRNA in bridges B5 and B8.

In terms of biological role, binds to 23S rRNA. Forms part of two intersubunit bridges in the 70S ribosome. The polypeptide is Large ribosomal subunit protein uL14 (Parvibaculum lavamentivorans (strain DS-1 / DSM 13023 / NCIMB 13966)).